We begin with the raw amino-acid sequence, 457 residues long: Phosphoglucosamine mutase (457 aa).

Ser-105 functions as the Phosphoserine intermediate in the catalytic mechanism. Residues Ser-105, Asp-247, Asp-249, and Asp-251 each contribute to the Mg(2+) site. Ser-105 is subject to Phosphoserine.

It belongs to the phosphohexose mutase family. Requires Mg(2+) as cofactor. Activated by phosphorylation.

It carries out the reaction alpha-D-glucosamine 1-phosphate = D-glucosamine 6-phosphate. Functionally, catalyzes the conversion of glucosamine-6-phosphate to glucosamine-1-phosphate. This chain is Phosphoglucosamine mutase, found in Protochlamydia amoebophila (strain UWE25).